Here is a 119-residue protein sequence, read N- to C-terminus: Hemerythrin-like protein (119 aa).

Positions 26, 56, 60, 75, 79, 107, and 112 each coordinate Fe cation.

It belongs to the hemerythrin family.

Oxygen-binding protein. The oxygen-binding site contains two iron atoms. In Naegleria fowleri (Brain eating amoeba), this protein is Hemerythrin-like protein (nfa1).